A 75-amino-acid chain; its full sequence is uncharacterized protein (75 aa).

The segment covering 19 to 38 has biased composition (polar residues); that stretch reads FHNTAPSKTNVNVPRANKSQ. Residues 19–42 form a disordered region; it reads FHNTAPSKTNVNVPRANKSQSKGK. A helical membrane pass occupies residues 47–66; the sequence is LLVLVGTLALVTSVISVNYQ.

It localises to the membrane. This is an uncharacterized protein from Saccharomyces cerevisiae (strain ATCC 204508 / S288c) (Baker's yeast).